Consider the following 396-residue polypeptide: Obg-like ATPase 1 (396 aa).

Residues Leu-23 to Leu-283 enclose the OBG-type G domain. Position 32–37 (Asn-32–Thr-37) interacts with ATP. 2 residues coordinate Mg(2+): Ser-36 and Thr-56. Residue Leu-231 participates in ATP binding. A Nuclear export signal motif is present at residues Leu-267–Met-274. Residues Gln-304–Phe-387 enclose the TGS domain.

It belongs to the TRAFAC class OBG-HflX-like GTPase superfamily. OBG GTPase family. YchF/OLA1 subfamily. As to quaternary structure, monomer. It depends on Mg(2+) as a cofactor.

The protein resides in the cytoplasm. Its subcellular location is the nucleus. It is found in the nucleolus. Functionally, hydrolyzes ATP, and can also hydrolyze GTP with lower efficiency. Has lower affinity for GTP. This is Obg-like ATPase 1 from Gallus gallus (Chicken).